Here is a 95-residue protein sequence, read N- to C-terminus: Phosphoribosyl-ATP pyrophosphatase (95 aa).

The protein belongs to the PRA-PH family.

It localises to the cytoplasm. It catalyses the reaction 1-(5-phospho-beta-D-ribosyl)-ATP + H2O = 1-(5-phospho-beta-D-ribosyl)-5'-AMP + diphosphate + H(+). It participates in amino-acid biosynthesis; L-histidine biosynthesis; L-histidine from 5-phospho-alpha-D-ribose 1-diphosphate: step 2/9. The protein is Phosphoribosyl-ATP pyrophosphatase of Methanocella arvoryzae (strain DSM 22066 / NBRC 105507 / MRE50).